The chain runs to 544 residues: Zinc finger and BTB domain-containing protein 7B (544 aa).

Residues 34–115 (CDLTIRTQGL…AYTATLTTSS (82 aa)) form the BTB domain. S150 carries the post-translational modification Phosphoserine. 2 disordered regions span residues 171 to 221 (TTAS…ARAN) and 244 to 314 (GRLG…EDPI). The span at 186-200 (PQVPLLPPPPPPPRP) shows a compositional bias: pro residues. Positions 201-210 (VARRSRKPRK) are enriched in basic residues. 2 positions are modified to N6-acetyllysine; by EP300; alternate: K210 and K216. Residues K210 and K216 each participate in a glycyl lysine isopeptide (Lys-Gly) (interchain with G-Cter in ubiquitin); alternate cross-link. A compositionally biased stretch (acidic residues) spans 277 to 286 (FEGEEEEEEM). K339 carries the post-translational modification N6-acetyllysine; by EP300; alternate. A Glycyl lysine isopeptide (Lys-Gly) (interchain with G-Cter in ubiquitin); alternate cross-link involves residue K339. Positions 348-404 (MPQECPVCHKIIHGAGKLPRHMRTHTGEKPFACEVCGVRFTRNDKLKIHMRKHTGER) are required for interaction with and acetylation by EP300. The segment at 350 to 372 (QECPVCHKIIHGAGKLPRHMRTH) adopts a C2H2-type 1 zinc-finger fold. Residue T373 is modified to Phosphothreonine. 2 C2H2-type zinc fingers span residues 378 to 400 (FACE…MRKH) and 406 to 428 (YSCP…MHLH). A C2H2-type 4; atypical zinc finger spans residues 434 to 458 (YECHLCHKAFAKEDHLQRHLKGQNC). 2 disordered regions span residues 465-493 (RRRK…DLSN) and 507-544 (WEQS…MESS). 2 stretches are compositionally biased toward low complexity: residues 511–522 (ATTGPPVTTQGP) and 531–544 (TPTT…MESS).

In terms of assembly, homodimerizes. Interacts with NCL, NEDD4 and YBX1. Interacts with HNRNPU (via RNA-binding RGG-box region); the interaction facilitates the recruitment of long non-coding RNA Blnc1 by ZBTB7B. Interacts with HDAC4 and HDAC5; the interaction allows the recruitment of HDAC4 and HDAC5 on CD8 loci for deacetylation and possible inhibition of CD8 genes expression. Acetylated directly and specifically by EP300. EP300-mediated acetylation of Lys-210, Lys-216 and Lys-339 stabilizes the protein by antagonizing ubiquitin conjugation. In terms of processing, ubiquitinated, leading to proteasomal degradation. Competes with acetylation on Lys-210, Lys-216 and Lys-339. As to expression, widely expressed, with a higher level in skin. Expressed in thymus. Restricted to CD4 cells (mature single positive CD4(+) and intermediate CD4(+)CD8(+) cells). Expressed in the luminal epithelial cells in the mammary glands where is up-regulated at late pregnancy and lactation. Expression is enriched in brown fat.

The protein localises to the nucleus. In terms of biological role, transcription regulator that acts as a key regulator of lineage commitment of immature T-cell precursors. Exerts distinct biological functions in the mammary epithelial cells and T cells in a tissue-specific manner. Necessary and sufficient for commitment of CD4 lineage, while its absence causes CD8 commitment. Development of immature T-cell precursors (thymocytes) to either the CD4 helper or CD8 killer T-cell lineages correlates precisely with their T-cell receptor specificity for major histocompatibility complex class II or class I molecules, respectively. Cross-antagonism between ZBTB7B and CBF complexes are determinative to CD4 versus CD8 cell fate decision. Suppresses RUNX3 expression and imposes CD4+ lineage fate by inducing the SOCS suppressors of cytokine signaling. induces, as a transcriptional activator, SOCS genes expression which represses RUNX3 expression and promotes the CD4+ lineage fate. During CD4 lineage commitment, associates with multiple sites at the CD8 locus, acting as a negative regulator of the CD8 promoter and enhancers by epigenetic silencing through the recruitment of class II histone deacetylases, such as HDAC4 and HDAC5, to these loci. Regulates the development of IL17-producing CD1d-restricted naural killer (NK) T cells. Also functions as an important metabolic regulator in the lactating mammary glands. Critical feed-forward regulator of insulin signaling in mammary gland lactation, directly regulates expression of insulin receptor substrate-1 (IRS-1) and insulin-induced Akt-mTOR-SREBP signaling. Transcriptional repressor of the collagen COL1A1 and COL1A2 genes. May also function as a repressor of fibronectin and possibly other extracellular matrix genes. Potent driver of brown fat development, thermogenesis and cold-induced beige fat formation. Recruits the brown fat lncRNA 1 (Blnc1):HNRNPU ribonucleoprotein complex to activate thermogenic gene expression in brown and beige adipocytes. The sequence is that of Zinc finger and BTB domain-containing protein 7B from Mus musculus (Mouse).